A 151-amino-acid chain; its full sequence is UPF0756 membrane protein Dred_1097 (151 aa).

4 consecutive transmembrane segments (helical) span residues 6–26 (IILL…LATA), 52–72 (VGLI…NIVY), 75–95 (LVMK…TLAT), and 111–131 (LIFG…GIPI).

It belongs to the UPF0756 family.

Its subcellular location is the cell membrane. In Desulforamulus reducens (strain ATCC BAA-1160 / DSM 100696 / MI-1) (Desulfotomaculum reducens), this protein is UPF0756 membrane protein Dred_1097.